Consider the following 358-residue polypeptide: Snurportin-1 (358 aa).

The residue at position 1 (M1) is an N-acetylmethionine. Disordered regions lie at residues 1–26 (MEEL…APHP) and 69–90 (DWTG…MDID). Positions 1-65 (MEELSQALAS…LDYVNHARRL (65 aa)) are necessary for interaction with KPNB1 and m3G-cap U1 and U5 snRNP import receptor activity. The necessary for interaction with XPO1 stretch occupies residues 1 to 160 (MEELSQALAS…NRFSSLLPGG (160 aa)). Positions 7 to 22 (ALASSFSVSQELNSTA) are enriched in polar residues. Residues 11–73 (SFSVSQELNS…RLAEDDWTGM (63 aa)) form the IBB domain. Position 75 is a phosphoserine (S75). The segment at 128-130 (GKR) is interaction with m3G-cap structure. Residues 210-329 (MHSKLPEEEG…DTKEKLTHKA (120 aa)) form a necessary for binding to the m3G-cap structure region. Residues 315–341 (KRSQEDTKEKLTHKASENGHYELEHLS) show a composition bias toward basic and acidic residues. The segment at 315 to 358 (KRSQEDTKEKLTHKASENGHYELEHLSTPKLRNPPHSSESLMDN) is disordered. Polar residues predominate over residues 349–358 (PHSSESLMDN). S351 is subject to Phosphoserine.

The protein belongs to the snurportin family. Component of an import snRNP complex composed of KPNB1, SNUPN, SMN1 and ZNF259. Component of a nuclear export receptor complex composed of KPNB1, Ran, SNUPN and XPO1. Found in a trimeric export complex with SNUPN, Ran and XPO1. Interacts (via IBB domain) with KPNB1; the interaction is direct. Interacts with DDX20, IPO7, SMN1, SNRPB and XPO1. Interacts directly with XPO1. Its interaction with XPO1 and binding to m3G-cap U snRNPs appears to be mutually exclusive. Can form homomers.

It localises to the nucleus. The protein localises to the cytoplasm. Functions as an U snRNP-specific nuclear import adapter. Involved in the trimethylguanosine (m3G)-cap-dependent nuclear import of U snRNPs. Binds specifically to the terminal m3G-cap U snRNAs. The protein is Snurportin-1 (Snupn) of Mus musculus (Mouse).